We begin with the raw amino-acid sequence, 248 residues long: Cobalt-precorrin-6A reductase (248 aa).

This sequence belongs to the precorrin-6x reductase family.

The catalysed reaction is Co-precorrin-6B + NAD(+) = Co-precorrin-6A + NADH + H(+). The protein operates within cofactor biosynthesis; adenosylcobalamin biosynthesis; cob(II)yrinate a,c-diamide from sirohydrochlorin (anaerobic route): step 7/10. Its function is as follows. Catalyzes the reduction of the macrocycle of cobalt-precorrin-6A to cobalt-precorrin-6B. The sequence is that of Cobalt-precorrin-6A reductase (cbiJ) from Methanococcus maripaludis (Methanococcus deltae).